A 147-amino-acid polypeptide reads, in one-letter code: Phospholipase A2 inhibitor subunit A (147 aa).

Positions E62 to F143 constitute a C-type lectin domain. Cystine bridges form between C64/C141 and C119/C133. The N-linked (GlcNAc...) asparagine glycan is linked to N103.

The protein belongs to the alpha-type phospholipase A2 inhibitor family. As to quaternary structure, homotrimer; non-covalently linked. In terms of processing, glycosylated. As to expression, expressed by the liver.

It localises to the secreted. In terms of biological role, inhibits the enzymatic activity of the acidic phospholipase A2 (PLA2). This chain is Phospholipase A2 inhibitor subunit A, found in Gloydius brevicaudus siniticus (Chinese mamushi).